The chain runs to 147 residues: Myoglobin (147 aa).

The Globin domain maps to 2-141; sequence HDAELVLKCW…VIGDIDTYYK (140 aa). H60 provides a ligand contact to nitrite. H60 serves as a coordination point for O2. H89 contributes to the heme b binding site.

It belongs to the globin family. Monomeric.

It is found in the cytoplasm. The protein localises to the sarcoplasm. It catalyses the reaction Fe(III)-heme b-[protein] + nitric oxide + H2O = Fe(II)-heme b-[protein] + nitrite + 2 H(+). It carries out the reaction H2O2 + AH2 = A + 2 H2O. Monomeric heme protein which primary function is to store oxygen and facilitate its diffusion within muscle tissues. Reversibly binds oxygen through a pentacoordinated heme iron and enables its timely and efficient release as needed during periods of heightened demand. Depending on the oxidative conditions of tissues and cells, and in addition to its ability to bind oxygen, it also has a nitrite reductase activity whereby it regulates the production of bioactive nitric oxide. Under stress conditions, like hypoxia and anoxia, it also protects cells against reactive oxygen species thanks to its pseudoperoxidase activity. The chain is Myoglobin (mb) from Cyprinus carpio (Common carp).